The chain runs to 176 residues: Cytochrome b (176 aa).

3 helical membrane-spanning segments follow: residues F33–M53, W77–V98, and W113–L133. H83 and H97 together coordinate heme b.

This sequence belongs to the cytochrome b family. As to quaternary structure, the cytochrome bc1 complex contains 11 subunits: 3 respiratory subunits (MT-CYB, CYC1 and UQCRFS1), 2 core proteins (UQCRC1 and UQCRC2) and 6 low-molecular weight proteins (UQCRH/QCR6, UQCRB/QCR7, UQCRQ/QCR8, UQCR10/QCR9, UQCR11/QCR10 and a cleavage product of UQCRFS1). This cytochrome bc1 complex then forms a dimer. Heme b serves as cofactor.

It is found in the mitochondrion inner membrane. In terms of biological role, component of the ubiquinol-cytochrome c reductase complex (complex III or cytochrome b-c1 complex) that is part of the mitochondrial respiratory chain. The b-c1 complex mediates electron transfer from ubiquinol to cytochrome c. Contributes to the generation of a proton gradient across the mitochondrial membrane that is then used for ATP synthesis. This Tomopeas ravum (Blunt-eared bat) protein is Cytochrome b (MT-CYB).